A 385-amino-acid chain; its full sequence is FAD-dependent monooxygenase verC2 (385 aa).

FAD-binding residues include arginine 27, aspartate 227, and alanine 240. Residue asparagine 320 is glycosylated (N-linked (GlcNAc...) asparagine). The chain crosses the membrane as a helical span at residues tryptophan 365–isoleucine 385.

The protein belongs to the paxM FAD-dependent monooxygenase family. FAD serves as cofactor.

It is found in the membrane. The protein operates within secondary metabolite biosynthesis; terpenoid biosynthesis. It functions in the pathway mycotoxin biosynthesis. In terms of biological role, FAD-dependent monooxygenase; part of the gene cluster that mediates the biosynthesis of the neurotoxin verrucosidin, a methylated alpha-pyrone polyketide that inhibits oxidative phosphorylation in mitochondria and thereby causes neurological diseases. The carbon backbone of verrucosidin is synthesized by the HR-PKS verA, and further modified by the other verrucodidin cluster enzymes. This is FAD-dependent monooxygenase verC2 from Penicillium polonicum.